A 602-amino-acid polypeptide reads, in one-letter code: NADH-quinone oxidoreductase subunit C/D (602 aa).

Residues 1-192 (MVNNMTDLTA…DPFELTKAKQ (192 aa)) form an NADH dehydrogenase I subunit C region. Residues 216–602 (DFMFLNLGPN…IDFVMSDVDR (387 aa)) form an NADH dehydrogenase I subunit D region.

This sequence in the N-terminal section; belongs to the complex I 30 kDa subunit family. In the C-terminal section; belongs to the complex I 49 kDa subunit family. As to quaternary structure, NDH-1 is composed of 13 different subunits. Subunits NuoB, CD, E, F, and G constitute the peripheral sector of the complex.

It is found in the cell inner membrane. The enzyme catalyses a quinone + NADH + 5 H(+)(in) = a quinol + NAD(+) + 4 H(+)(out). Its function is as follows. NDH-1 shuttles electrons from NADH, via FMN and iron-sulfur (Fe-S) centers, to quinones in the respiratory chain. The immediate electron acceptor for the enzyme in this species is believed to be ubiquinone. Couples the redox reaction to proton translocation (for every two electrons transferred, four hydrogen ions are translocated across the cytoplasmic membrane), and thus conserves the redox energy in a proton gradient. The chain is NADH-quinone oxidoreductase subunit C/D from Klebsiella pneumoniae subsp. pneumoniae (strain ATCC 700721 / MGH 78578).